The following is a 339-amino-acid chain: MNQRNASMTVIGAGSYGTALAITLARNGHEVVLWGHDPEHIATLERDRCNAAFLPDVPFPDTLHLESDLVTALAASRNILVVVPSHVFGEVLRQIKPLMRPDARLVWATKGLEAETGRLLQDVAREALGDQIPLAVISGPTFAKELAAGLPTAISLASTDQTFADDLQQLLHCGKSFRVYSNPDFIGVQLGGAVKNVIAIGAGMSDGIGFGANARTALITRGLAEMSRLGAALGADPATFMGMAGLGDLVLTCTDNQSRNRRFGMMLGQGMDVQSAQEKIGQVVEGYRNTKEVRELAHRFGVEMPITEEIYQVLYCGKNAREAALTLLGRARKDERSSH.

4 residues coordinate NADPH: serine 15, tyrosine 16, histidine 36, and lysine 110. Sn-glycerol 3-phosphate contacts are provided by lysine 110, glycine 139, and threonine 141. Alanine 143 serves as a coordination point for NADPH. Sn-glycerol 3-phosphate is bound by residues lysine 195, aspartate 248, serine 258, arginine 259, and asparagine 260. The active-site Proton acceptor is the lysine 195. Position 259 (arginine 259) interacts with NADPH. NADPH is bound by residues valine 283 and glutamate 285.

This sequence belongs to the NAD-dependent glycerol-3-phosphate dehydrogenase family.

The protein localises to the cytoplasm. The catalysed reaction is sn-glycerol 3-phosphate + NAD(+) = dihydroxyacetone phosphate + NADH + H(+). It carries out the reaction sn-glycerol 3-phosphate + NADP(+) = dihydroxyacetone phosphate + NADPH + H(+). It functions in the pathway membrane lipid metabolism; glycerophospholipid metabolism. Its function is as follows. Catalyzes the reduction of the glycolytic intermediate dihydroxyacetone phosphate (DHAP) to sn-glycerol 3-phosphate (G3P), the key precursor for phospholipid synthesis. The sequence is that of Glycerol-3-phosphate dehydrogenase [NAD(P)+] from Shigella flexneri serotype 5b (strain 8401).